Reading from the N-terminus, the 318-residue chain is Methionyl-tRNA formyltransferase (318 aa).

112–115 is a binding site for (6S)-5,6,7,8-tetrahydrofolate; that stretch reads SILP.

It belongs to the Fmt family.

The enzyme catalyses L-methionyl-tRNA(fMet) + (6R)-10-formyltetrahydrofolate = N-formyl-L-methionyl-tRNA(fMet) + (6S)-5,6,7,8-tetrahydrofolate + H(+). Its function is as follows. Attaches a formyl group to the free amino group of methionyl-tRNA(fMet). The formyl group appears to play a dual role in the initiator identity of N-formylmethionyl-tRNA by promoting its recognition by IF2 and preventing the misappropriation of this tRNA by the elongation apparatus. The chain is Methionyl-tRNA formyltransferase from Shewanella sp. (strain MR-4).